Consider the following 170-residue polypeptide: Acireductone dioxygenase (170 aa).

4 residues coordinate Fe(2+): histidine 99, histidine 101, glutamate 105, and histidine 144. Residues histidine 99, histidine 101, glutamate 105, and histidine 144 each contribute to the Ni(2+) site.

This sequence belongs to the acireductone dioxygenase (ARD) family. As to quaternary structure, monomer. The cofactor is Fe(2+). Ni(2+) serves as cofactor.

It carries out the reaction 1,2-dihydroxy-5-(methylsulfanyl)pent-1-en-3-one + O2 = 3-(methylsulfanyl)propanoate + CO + formate + 2 H(+). It catalyses the reaction 1,2-dihydroxy-5-(methylsulfanyl)pent-1-en-3-one + O2 = 4-methylsulfanyl-2-oxobutanoate + formate + 2 H(+). It functions in the pathway amino-acid biosynthesis; L-methionine biosynthesis via salvage pathway; L-methionine from S-methyl-5-thio-alpha-D-ribose 1-phosphate: step 5/6. Its function is as follows. Catalyzes 2 different reactions between oxygen and the acireductone 1,2-dihydroxy-3-keto-5-methylthiopentene (DHK-MTPene) depending upon the metal bound in the active site. Fe-containing acireductone dioxygenase (Fe-ARD) produces formate and 2-keto-4-methylthiobutyrate (KMTB), the alpha-ketoacid precursor of methionine in the methionine recycle pathway. Ni-containing acireductone dioxygenase (Ni-ARD) produces methylthiopropionate, carbon monoxide and formate, and does not lie on the methionine recycle pathway. The polypeptide is Acireductone dioxygenase (Bacillus mycoides (strain KBAB4) (Bacillus weihenstephanensis)).